Consider the following 157-residue polypeptide: Endoribonuclease YbeY (157 aa).

The Zn(2+) site is built by histidine 114, histidine 118, and histidine 124.

Belongs to the endoribonuclease YbeY family. Zn(2+) serves as cofactor.

Its subcellular location is the cytoplasm. Its function is as follows. Single strand-specific metallo-endoribonuclease involved in late-stage 70S ribosome quality control and in maturation of the 3' terminus of the 16S rRNA. The chain is Endoribonuclease YbeY from Salmonella agona (strain SL483).